Consider the following 456-residue polypeptide: tRNA modification GTPase MnmE (456 aa).

Residues R24, E81, and K120 each coordinate (6S)-5-formyl-5,6,7,8-tetrahydrofolate. The TrmE-type G domain maps to 216–379; it reads GMTVVIAGRP…LREHLKACMG (164 aa). N226 contributes to the K(+) binding site. GTP-binding positions include 226–231, 245–251, 270–273, 335–338, and 359–361; these read NAGKSS, TEIAGTT, DTAG, NKAD, and SAR. S230 lines the Mg(2+) pocket. K(+) is bound by residues T245, I247, and T250. Residue T251 coordinates Mg(2+). Residue K456 participates in (6S)-5-formyl-5,6,7,8-tetrahydrofolate binding.

Belongs to the TRAFAC class TrmE-Era-EngA-EngB-Septin-like GTPase superfamily. TrmE GTPase family. As to quaternary structure, homodimer. Heterotetramer of two MnmE and two MnmG subunits. The cofactor is K(+).

It is found in the cytoplasm. In terms of biological role, exhibits a very high intrinsic GTPase hydrolysis rate. Involved in the addition of a carboxymethylaminomethyl (cmnm) group at the wobble position (U34) of certain tRNAs, forming tRNA-cmnm(5)s(2)U34. This is tRNA modification GTPase MnmE from Pseudomonas syringae pv. tomato (strain ATCC BAA-871 / DC3000).